Consider the following 238-residue polypeptide: Ribonuclease PH (238 aa).

Phosphate-binding positions include arginine 86 and 124-126; that span reads GTR.

The protein belongs to the RNase PH family. In terms of assembly, homohexameric ring arranged as a trimer of dimers.

The enzyme catalyses tRNA(n+1) + phosphate = tRNA(n) + a ribonucleoside 5'-diphosphate. Functionally, phosphorolytic 3'-5' exoribonuclease that plays an important role in tRNA 3'-end maturation. Removes nucleotide residues following the 3'-CCA terminus of tRNAs; can also add nucleotides to the ends of RNA molecules by using nucleoside diphosphates as substrates, but this may not be physiologically important. Probably plays a role in initiation of 16S rRNA degradation (leading to ribosome degradation) during starvation. This is Ribonuclease PH from Geobacter sulfurreducens (strain ATCC 51573 / DSM 12127 / PCA).